A 104-amino-acid polypeptide reads, in one-letter code: Complex III assembly factor LYRM7 (104 aa).

Residue Ser60 is modified to Phosphoserine.

Belongs to the complex I LYR family. As to quaternary structure, interacts with UQCRFS1.

It localises to the mitochondrion matrix. Its function is as follows. Assembly factor required for Rieske Fe-S protein UQCRFS1 incorporation into the cytochrome b-c1 (CIII) complex. Functions as a chaperone, binding to this subunit within the mitochondrial matrix and stabilizing it prior to its translocation and insertion into the late CIII dimeric intermediate within the mitochondrial inner membrane. This chain is Complex III assembly factor LYRM7 (LYRM7), found in Pongo abelii (Sumatran orangutan).